The sequence spans 319 residues: Aspartate carbamoyltransferase catalytic subunit (319 aa).

The carbamoyl phosphate site is built by Arg65 and Thr66. Lys93 provides a ligand contact to L-aspartate. Residues Arg115, His149, and Gln152 each contribute to the carbamoyl phosphate site. Arg182 and Arg237 together coordinate L-aspartate. Carbamoyl phosphate is bound by residues Gly278 and Pro279.

This sequence belongs to the aspartate/ornithine carbamoyltransferase superfamily. ATCase family. In terms of assembly, heterododecamer (2C3:3R2) of six catalytic PyrB chains organized as two trimers (C3), and six regulatory PyrI chains organized as three dimers (R2).

It catalyses the reaction carbamoyl phosphate + L-aspartate = N-carbamoyl-L-aspartate + phosphate + H(+). It participates in pyrimidine metabolism; UMP biosynthesis via de novo pathway; (S)-dihydroorotate from bicarbonate: step 2/3. Catalyzes the condensation of carbamoyl phosphate and aspartate to form carbamoyl aspartate and inorganic phosphate, the committed step in the de novo pyrimidine nucleotide biosynthesis pathway. The sequence is that of Aspartate carbamoyltransferase catalytic subunit from Azoarcus sp. (strain BH72).